Here is a 222-residue protein sequence, read N- to C-terminus: Small ribosomal subunit protein uS3 (222 aa).

Residues 39-108 enclose the KH type-2 domain; that stretch reads IRRHIKEKLY…TISLDIKEIK (70 aa).

The protein belongs to the universal ribosomal protein uS3 family. As to quaternary structure, part of the 30S ribosomal subunit. Forms a tight complex with proteins S10 and S14.

Binds the lower part of the 30S subunit head. Binds mRNA in the 70S ribosome, positioning it for translation. This is Small ribosomal subunit protein uS3 from Caldicellulosiruptor bescii (strain ATCC BAA-1888 / DSM 6725 / KCTC 15123 / Z-1320) (Anaerocellum thermophilum).